The sequence spans 478 residues: Zinc finger and SCAN domain-containing protein 26 (478 aa).

Lysine 17 is covalently cross-linked (Glycyl lysine isopeptide (Lys-Gly) (interchain with G-Cter in SUMO2)). The region spanning 51–133 (CKQFRQLRYE…VVLEDLQLDL (83 aa)) is the SCAN box domain. Disordered regions lie at residues 159–181 (GVQEQQVRHECEVTKPEKEKGEE) and 200–226 (ESSGKISEPMEAHNEGSNLERHQAKPK). Basic and acidic residues-rich tracts occupy residues 164–181 (QVRHECEVTKPEKEKGEE) and 207–226 (EPMEAHNEGSNLERHQAKPK). The segment at 231-253 (YKCSEREQRFIQHLDLIEHASTH) adopts a C2H2-type 1; degenerate zinc-finger fold. 7 consecutive C2H2-type zinc fingers follow at residues 282–304 (HQCHECGKAFQRSSHLVRHQKIH), 310–332 (YQCNECGKVFSQNAGLLEHLRIH), 338–360 (YLCIHCGKNFRRSSHLNRHQRIH), 366–388 (CECKECGKTFSQALLLTHHQRIH), 394–416 (HQCNECGKAFSLTSDLIRHHRIH), 422–444 (FKCNICQKAFRLNSHLAQHVRIH), and 450–472 (YQCSECGEAFRQRSGLFQHQRYH).

The protein localises to the nucleus. Its function is as follows. May be involved in transcriptional regulation. The polypeptide is Zinc finger and SCAN domain-containing protein 26 (ZSCAN26) (Homo sapiens (Human)).